The primary structure comprises 608 residues: ATP-citrate synthase beta chain protein 2 (608 aa).

ATP-binding positions include 214–234 and 265–291; these read ILRFNNIPQIKMMVVLGELGG and FKSEVQFGHAGAKSGGEMESAQAKNQA. Glu231 is a Mg(2+) binding site. His273 (tele-phosphohistidine intermediate) is an active-site residue. 292-302 contacts CoA; it reads LIDAGAIVPTS.

This sequence belongs to the succinate/malate CoA ligase alpha subunit family. Heterooctamer of 4 alpha and 4 beta chains. Expressed in trichomes, epidermal leaf cells, anther tapetal cells, stigma and in young vascular bundles of expanding leaves, cotyledons, roots, pedicel of flowers and siliques.

The protein localises to the cytoplasm. It is found in the cytosol. The enzyme catalyses oxaloacetate + acetyl-CoA + ADP + phosphate = citrate + ATP + CoA. In terms of biological role, ATP citrate-lyase is the primary enzyme responsible for the synthesis of cytosolic acetyl-CoA, used for the elongation of fatty acids and biosynthesis of isoprenoids, flavonoids and malonated derivatives. May supply substrate to the cytosolic acetyl-CoA carboxylase, which generates the malonyl-CoA used for the synthesis of a multitude of compounds, including very long chain fatty acids and flavonoids. Required for normal growth and development and elongation of C18 fatty acids to C20 to C24 fatty acids in seeds. n contrast to all known animal ACL enzymes having a homomeric structure, plant ACLs are composed of alpha and beta chains. The polypeptide is ATP-citrate synthase beta chain protein 2 (Arabidopsis thaliana (Mouse-ear cress)).